Reading from the N-terminus, the 483-residue chain is MPLVIFNSLGREKQLFEPLHPGVVGIYVCGPTVYGHAHLGHAKSYVSFDVVVRWLRESGYRVKYVQNITDVGHLSDDADEGEDKIARQARLEKTDPMEIAQFYTRSFLDDMDRLGVLRPNISPLATGHIPEQIALVDKLVKRGHAYEVNGNVYFSVESFPGYGKLSGRTDLDAVQSGARVGVRSEKHNPSDFALWKKAEEGHLMQWDSPWGMGYPGWHLECSAMSMKYLGDTIDIHGGGMENRFPHHECEIAQSEAANEKPYVRYWMHNNMVTVNGTKMGKSLKNAVNLKEIFKTVDPLAVRFFILQSHYRSPLDYSDTAVAGSTAGLQKLRETRQRLIEATPGTGLLDAAPFSLRFREAMDDDFNTPVAIAALFDFSKALNTALDRPDGLNASSLEAARELFSTAAVTVLGIMTEDAEGGMHDGGRSAETLDEVMGVLMELRSEARKNKDFATSDLIRDHLLAAGIEIKDTREGASWSKTRH.

C29 is a Zn(2+) binding site. A 'HIGH' region motif is present at residues 31–41; the sequence is PTVYGHAHLGH. Residues C221, H246, and E250 each coordinate Zn(2+). The 'KMSKS' region signature appears at 278 to 282; that stretch reads KMGKS. K281 contributes to the ATP binding site.

The protein belongs to the class-I aminoacyl-tRNA synthetase family. As to quaternary structure, monomer. Requires Zn(2+) as cofactor.

The protein localises to the cytoplasm. The enzyme catalyses tRNA(Cys) + L-cysteine + ATP = L-cysteinyl-tRNA(Cys) + AMP + diphosphate. This is Cysteine--tRNA ligase from Chlorobium luteolum (strain DSM 273 / BCRC 81028 / 2530) (Pelodictyon luteolum).